The following is a 395-amino-acid chain: LL-diaminopimelate aminotransferase (395 aa).

Substrate is bound by residues Y14 and G41. Pyridoxal 5'-phosphate contacts are provided by residues Y71, 104-105 (AK), Y128, N174, Y205, and 233-235 (SFS). Substrate-binding residues include K105, Y128, and N174. K236 is subject to N6-(pyridoxal phosphate)lysine. 2 residues coordinate pyridoxal 5'-phosphate: R244 and N275. 2 residues coordinate substrate: N275 and R368.

This sequence belongs to the class-I pyridoxal-phosphate-dependent aminotransferase family. LL-diaminopimelate aminotransferase subfamily. As to quaternary structure, homodimer. Pyridoxal 5'-phosphate serves as cofactor.

It catalyses the reaction (2S,6S)-2,6-diaminopimelate + 2-oxoglutarate = (S)-2,3,4,5-tetrahydrodipicolinate + L-glutamate + H2O + H(+). Its pathway is amino-acid biosynthesis; L-lysine biosynthesis via DAP pathway; LL-2,6-diaminopimelate from (S)-tetrahydrodipicolinate (aminotransferase route): step 1/1. Its function is as follows. Involved in the synthesis of meso-diaminopimelate (m-DAP or DL-DAP), required for both lysine and peptidoglycan biosynthesis. Catalyzes the direct conversion of tetrahydrodipicolinate to LL-diaminopimelate. This is LL-diaminopimelate aminotransferase from Chlamydia caviae (strain ATCC VR-813 / DSM 19441 / 03DC25 / GPIC) (Chlamydophila caviae).